A 293-amino-acid polypeptide reads, in one-letter code: Methylsterol monooxygenase 1 (293 aa).

Helical transmembrane passes span 55 to 75 (LIVH…FQFI) and 100 to 120 (VLLF…YYFT). The Fatty acid hydroxylase domain maps to 145 to 274 (CAVIEDTWHY…FTWWDRIFGT (130 aa)). Positions 157–161 (HRLLH) match the Histidine box-1 motif. Positions 170 to 174 (HKIHH) match the Histidine box-2 motif. Residues 199-219 (FFIGIMLLCDHVILLWAWVTV) traverse the membrane as a helical segment. The short motif at 249–255 (HHDFHHM) is the Histidine box-3 element.

The protein belongs to the sterol desaturase family. Fe cation is required as a cofactor. Ubiquitinated by MARCHF6, leading to proteasomal degradation.

It is found in the endoplasmic reticulum membrane. It carries out the reaction 4,4-dimethyl-5alpha-cholest-7-en-3beta-ol + 6 Fe(II)-[cytochrome b5] + 3 O2 + 5 H(+) = 4alpha-carboxy-4beta-methyl-5alpha-cholest-7-ene-3beta-ol + 6 Fe(III)-[cytochrome b5] + 4 H2O. The catalysed reaction is 4,4-dimethyl-5alpha-cholesta-8,24-dien-3beta-ol + 6 Fe(II)-[cytochrome b5] + 3 O2 + 5 H(+) = 4beta-methylzymosterol-4alpha-carboxylate + 6 Fe(III)-[cytochrome b5] + 4 H2O. The enzyme catalyses 4alpha-methylzymosterol + 6 Fe(II)-[cytochrome b5] + 3 O2 + 5 H(+) = 4alpha-carboxyzymosterol + 6 Fe(III)-[cytochrome b5] + 4 H2O. It catalyses the reaction 4alpha-methyl-5alpha-cholest-7-en-3beta-ol + 6 Fe(II)-[cytochrome b5] + 3 O2 + 5 H(+) = 4alpha-carboxy-5alpha-cholest-7-en-3beta-ol + 6 Fe(III)-[cytochrome b5] + 4 H2O. It carries out the reaction 4,4-dimethyl-5alpha-cholest-8-en-3beta-ol + 6 Fe(II)-[cytochrome b5] + 3 O2 + 5 H(+) = 4alpha-carboxy-4beta-methyl-5alpha-cholest-8-en-3beta-ol + 6 Fe(III)-[cytochrome b5] + 4 H2O. The catalysed reaction is 4alpha-methyl-5alpha-cholest-8-en-3beta-ol + 6 Fe(II)-[cytochrome b5] + 3 O2 + 5 H(+) = 4alpha-carboxy-5alpha-cholest-8-ene-3beta-ol + 6 Fe(III)-[cytochrome b5] + 4 H2O. Its pathway is steroid biosynthesis; zymosterol biosynthesis; zymosterol from lanosterol: step 3/6. It participates in steroid biosynthesis; cholesterol biosynthesis. In terms of biological role, catalyzes the three-step monooxygenation required for the demethylation of 4,4-dimethyl and 4alpha-methylsterols, which can be subsequently metabolized to cholesterol. The protein is Methylsterol monooxygenase 1 (MSMO1) of Sus scrofa (Pig).